The chain runs to 302 residues: Enoyl-CoA delta isomerase 1, mitochondrial (302 aa).

A mitochondrion-targeting transit peptide spans Met1–Arg41. N6-acetyllysine; alternate is present on Lys61. Lys61 is subject to N6-succinyllysine; alternate. Residue Lys84 is modified to N6-succinyllysine. Position 89 is an N6-acetyllysine (Lys89). Residues Ala106–Leu110, Gly153, and Asn177 contribute to the substrate site. Lys283 carries the N6-acetyllysine; alternate modification. Lys283 is modified (N6-succinyllysine; alternate). Lys288 carries the post-translational modification N6-succinyllysine.

This sequence belongs to the enoyl-CoA hydratase/isomerase family. As to quaternary structure, homotrimer. Expressed in liver (at protein level).

It is found in the mitochondrion matrix. It catalyses the reaction a (3Z)-enoyl-CoA = a 4-saturated (2E)-enoyl-CoA. The enzyme catalyses a (3E)-enoyl-CoA = a 4-saturated (2E)-enoyl-CoA. The catalysed reaction is (3Z)-octenoyl-CoA = (2E)-octenoyl-CoA. It carries out the reaction (2E)-tetradecenoyl-CoA = (3Z)-tetradecenoyl-CoA. It catalyses the reaction (3Z)-dodecenoyl-CoA = (2E)-dodecenoyl-CoA. The enzyme catalyses (3Z)-hexenoyl-CoA = (2E)-hexenoyl-CoA. The catalysed reaction is (3Z)-decenoyl-CoA = (2E)-decenoyl-CoA. It participates in lipid metabolism; fatty acid beta-oxidation. In terms of biological role, key enzyme of fatty acid beta-oxidation. Able to isomerize both 3-cis (3Z) and 3-trans (3E) double bonds into the 2-trans (2E) form in a range of enoyl-CoA species, with a preference for (3Z)-enoyl-CoAs over (3E)-enoyl-CoAs. The catalytic efficiency of this enzyme is not affected by the fatty acyl chain length. In Homo sapiens (Human), this protein is Enoyl-CoA delta isomerase 1, mitochondrial (ECI1).